Here is a 936-residue protein sequence, read N- to C-terminus: Aftiphilin (936 aa).

Residues M1–E36 form a disordered region. The interaction with AP1G1, AP1G2, GGA1 and GGA3 stretch occupies residues M1–E523. Acidic residues predominate over residues G19–G29. Positions F28 to F31 match the WXXF motif 1 motif. Phosphoserine is present on S151. Disordered regions lie at residues T197 to S216 and K374 to S409. Over residues K374–K389 the composition is skewed to basic and acidic residues. The interaction with AP1G1 stretch occupies residues E386–E610. Phosphoserine is present on S395. Residues F432–F435 carry the WXXF motif 2 motif. The short motif at G436–F438 is the WXXF motif 3 (partial) element. The WXXF motif 4 motif lies at F478 to F481. The residue at position 518 (S518) is a Phosphoserine. The tract at residues G589–L637 is disordered. Basic and acidic residues predominate over residues E595–E610. Residue T617 is modified to Phosphothreonine. The segment covering T617–S628 has biased composition (polar residues). The CLTCL1/Clathrin-binding motif lies at Y716–W718. The interval L825–D829 is clathrin-binding.

As to quaternary structure, self-associates. Interacts with GGA1 (via GAE domain). Interacts with GGA3 (via GAE domain), AP1G1 (via GAE domain) and AP1G2 (via GAE domain). Component of the aftiphilin/p200/gamma-synergin complex, at least composed of AFTPH/aftiphilin, HEATR5B/p200a and SYNRG/gamma-synergin, which plays a role in the AP1G1/AP-1-mediated protein trafficking from early to recycling endosomes. Within the complex interacts with HEATR5B/p200a and SYNRG/gamma-synergin; the interactions are direct. Interacts with AP1G1/AP-1; the interaction is required to recruit AFTPH/aftiphilin to the perinuclear region of the cell. Interacts with CLTCL1/Clathrin.

It localises to the cytoplasm. The protein resides in the perinuclear region. It is found in the cytoplasmic vesicle. The protein localises to the clathrin-coated vesicle. Functionally, component of clathrin-coated vesicles. Component of the aftiphilin/p200/gamma-synergin complex, which plays roles in AP1G1/AP-1-mediated protein trafficking including the trafficking of transferrin from early to recycling endosomes, and the membrane trafficking of furin and the lysosomal enzyme cathepsin D between the trans-Golgi network (TGN) and endosomes. The polypeptide is Aftiphilin (AFTPH) (Homo sapiens (Human)).